The sequence spans 466 residues: UDP-N-acetylglucosamine--dolichyl-phosphate N-acetylglucosaminephosphotransferase (466 aa).

A helical membrane pass occupies residues 12-32 (AAFAVAAHAPVLGLILLGSIV). Residue Asp57 coordinates UDP-N-acetyl-alpha-D-glucosamine. Residue Asn59 is glycosylated (N-linked (GlcNAc...) asparagine). Glu90 contacts UDP-N-acetyl-alpha-D-glucosamine. The next 2 membrane-spanning stretches (helical) occupy residues 91 to 111 (SLGI…TVCL) and 124 to 144 (PYAS…LGFV). Lys155 is a dolichyl phosphate binding site. 2 consecutive transmembrane segments (helical) span residues 156–176 (IILT…SLSV) and 236–256 (GAAL…LCIF). 255–263 (IFCTNSINI) contributes to the dolichyl phosphate binding site. Residue Asn262 coordinates Mg(2+). 4 consecutive transmembrane segments (helical) span residues 263–283 (ILAG…VASV), 316–336 (DHQL…LALW), 345–365 (VFVG…SSIT), and 374–394 (LFFA…FSIV). Asn268 is a binding site for UDP-N-acetyl-alpha-D-glucosamine. Asp349 is a Mg(2+) binding site. 398-400 (RHR) is a UDP-N-acetyl-alpha-D-glucosamine binding site. Asn416 carries N-linked (GlcNAc...) asparagine glycosylation. Residues 442-462 (CQVIACVLGFVVRYVLSAFLY) form a helical membrane-spanning segment.

The protein belongs to the glycosyltransferase 4 family. The cofactor is Mg(2+).

Its subcellular location is the endoplasmic reticulum membrane. It catalyses the reaction a di-trans,poly-cis-dolichyl phosphate + UDP-N-acetyl-alpha-D-glucosamine = an N-acetyl-alpha-D-glucosaminyl-diphospho-di-trans,poly-cis-dolichol + UMP. The protein operates within protein modification; protein glycosylation. With respect to regulation, inhibited by natural nucleoside antibiotic tunicamycin, which acts as a structural analog and competitor of UDP-GlcNAc. Its function is as follows. UDP-N-acetylglucosamine--dolichyl-phosphate N-acetylglucosaminephosphotransferase that operates in the biosynthetic pathway of dolichol-linked oligosaccharides, the glycan precursors employed in protein asparagine (N)-glycosylation. The assembly of dolichol-linked oligosaccharides begins on the cytosolic side of the endoplasmic reticulum membrane and finishes in its lumen. The sequential addition of sugars to dolichol pyrophosphate produces dolichol-linked oligosaccharides containing fourteen sugars, including two GlcNAcs, nine mannoses and three glucoses. Once assembled, the oligosaccharide is transferred from the lipid to nascent proteins by oligosaccharyltransferases. Catalyzes the initial step of dolichol-linked oligosaccharide biosynthesis, transfering GlcNAc-1-P from cytosolic UDP-GlcNAc onto the carrier lipid dolichyl phosphate (P-dolichol), yielding GlcNAc-P-P-dolichol embedded in the cytoplasmic leaflet of the endoplasmic reticulum membrane. This is UDP-N-acetylglucosamine--dolichyl-phosphate N-acetylglucosaminephosphotransferase (NAGT) from Leishmania amazonensis.